The primary structure comprises 299 residues: Bifunctional protein FolD (299 aa).

NADP(+)-binding positions include 169 to 171 (GRS), S194, and I235.

The protein belongs to the tetrahydrofolate dehydrogenase/cyclohydrolase family. As to quaternary structure, homodimer.

The catalysed reaction is (6R)-5,10-methylene-5,6,7,8-tetrahydrofolate + NADP(+) = (6R)-5,10-methenyltetrahydrofolate + NADPH. It carries out the reaction (6R)-5,10-methenyltetrahydrofolate + H2O = (6R)-10-formyltetrahydrofolate + H(+). It participates in one-carbon metabolism; tetrahydrofolate interconversion. Its function is as follows. Catalyzes the oxidation of 5,10-methylenetetrahydrofolate to 5,10-methenyltetrahydrofolate and then the hydrolysis of 5,10-methenyltetrahydrofolate to 10-formyltetrahydrofolate. The chain is Bifunctional protein FolD from Nostoc sp. (strain PCC 7120 / SAG 25.82 / UTEX 2576).